A 171-amino-acid polypeptide reads, in one-letter code: MNYSIVMFPSKPFQDTANGYRRRYDAHYANIPPHITLKERFSIAEEERSKIIKALRTIGQTHKPIAIDVYKVDTFYPQSTTIYYKIKENDRLLALYEALHRDPFPRKRAHPVFVPHITIAQGLPQSEHADIVGQLKMIDVSHQETIDRFQLLKQLDNGSWAVYETFLLEGD.

His34 (proton donor) is an active-site residue. 2 consecutive short sequence motifs (HXTX) follow at residues 34–37 and 116–119; these read HITL and HITI. The active-site Proton acceptor is His116.

Belongs to the 2H phosphoesterase superfamily. YjcG family.

This chain is Putative phosphoesterase ABC1741, found in Shouchella clausii (strain KSM-K16) (Alkalihalobacillus clausii).